Consider the following 271-residue polypeptide: Formamidopyrimidine-DNA glycosylase (271 aa).

Pro2 (schiff-base intermediate with DNA) is an active-site residue. The Proton donor role is filled by Glu3. Residue Lys58 is the Proton donor; for beta-elimination activity of the active site. Positions 91, 110, and 152 each coordinate DNA. The segment at 237 to 271 (SVYGRNDAPCPGCGAPIRRSRQGGRSTYFCDRCQH) adopts an FPG-type zinc-finger fold. Residue Arg261 is the Proton donor; for delta-elimination activity of the active site.

It belongs to the FPG family. Monomer. Zn(2+) serves as cofactor.

The catalysed reaction is Hydrolysis of DNA containing ring-opened 7-methylguanine residues, releasing 2,6-diamino-4-hydroxy-5-(N-methyl)formamidopyrimidine.. The enzyme catalyses 2'-deoxyribonucleotide-(2'-deoxyribose 5'-phosphate)-2'-deoxyribonucleotide-DNA = a 3'-end 2'-deoxyribonucleotide-(2,3-dehydro-2,3-deoxyribose 5'-phosphate)-DNA + a 5'-end 5'-phospho-2'-deoxyribonucleoside-DNA + H(+). Its function is as follows. Involved in base excision repair of DNA damaged by oxidation or by mutagenic agents. Acts as a DNA glycosylase that recognizes and removes damaged bases. Has a preference for oxidized purines, such as 7,8-dihydro-8-oxoguanine (8-oxoG). Has AP (apurinic/apyrimidinic) lyase activity and introduces nicks in the DNA strand. Cleaves the DNA backbone by beta-delta elimination to generate a single-strand break at the site of the removed base with both 3'- and 5'-phosphates. This Geotalea uraniireducens (strain Rf4) (Geobacter uraniireducens) protein is Formamidopyrimidine-DNA glycosylase.